We begin with the raw amino-acid sequence, 614 residues long: Zinc finger and SCAN domain-containing protein 2 (614 aa).

2 disordered regions span residues Met-1–Gln-26 and Glu-43–Ala-76. Residues Ser-59–Leu-132 enclose the SCAN box domain. 14 C2H2-type zinc fingers span residues Tyr-222–His-244, Tyr-250–His-272, Tyr-278–His-300, Phe-306–His-328, Tyr-334–His-356, Tyr-362–His-384, Tyr-390–His-412, Tyr-418–His-440, Tyr-446–His-468, Tyr-474–His-496, Tyr-502–His-524, Tyr-530–His-552, Tyr-558–His-580, and Tyr-586–His-608.

Belongs to the krueppel C2H2-type zinc-finger protein family.

It is found in the nucleus. Its function is as follows. May be involved in transcriptional regulation during the post-meiotic stages of spermatogenesis. This Homo sapiens (Human) protein is Zinc finger and SCAN domain-containing protein 2 (ZSCAN2).